Reading from the N-terminus, the 225-residue chain is Protein-disulfide oxidoreductase DsbI (225 aa).

Residues 27 to 47 (FLWLLMAIAMGGLIILAHSFF) traverse the membrane as a helical segment. Cys-56 and Cys-59 are oxidised to a cystine. 2 helical membrane passes run 65–85 (AMFVMVIGGVIAAINPKNIVL) and 87–107 (LIGCIAAFYGSIMGIKFSIKL). Cys-128 and Cys-154 form a disulfide bridge. Residues 199–219 (CMLAFGLCLILLLVMSGAWAL) traverse the membrane as a helical segment.

The protein belongs to the DsbB family. DsbI subfamily. As to quaternary structure, interacts with DsbL.

The protein resides in the cell inner membrane. In terms of biological role, required for disulfide bond formation in some proteins. Part of a redox system composed of DsbI and DsbL that mediates formation of an essential disulfide bond in AssT. The chain is Protein-disulfide oxidoreductase DsbI from Salmonella choleraesuis (strain SC-B67).